Here is a 175-residue protein sequence, read N- to C-terminus: Putative carbonic anhydrase-like protein YbcF (175 aa).

This sequence belongs to the beta-class carbonic anhydrase family.

The polypeptide is Putative carbonic anhydrase-like protein YbcF (ybcF) (Bacillus subtilis (strain 168)).